The following is a 284-amino-acid chain: MTAHLIDGKLIAKQVRQHVTSYVDSLTQAGKRQPGLAVVLVGSDAASQVYVSNKRKACDEVGFVSRSFDLPSDTTEETLLNLVDQLNEDKEIDGILVQLPLPAGLNAEKVLERIHPHKDVDGFHPYNIGRLAQRIPALRPCTPKGIMTMIESTKRPVKGLDAVIVGASNIVGRPMSLELLLAGCTVTTCHKFTQDLKSHVQRADLLVVAVGKPNFIPGDWVKPGAIVIDVGINRVNDGSLVGDVDFDKAKERAGWITPVPGGVGPMTVASLIENTLEAYVKYHS.

Residues 166 to 168 and Ile-232 contribute to the NADP(+) site; that span reads GAS.

It belongs to the tetrahydrofolate dehydrogenase/cyclohydrolase family. In terms of assembly, homodimer.

The catalysed reaction is (6R)-5,10-methylene-5,6,7,8-tetrahydrofolate + NADP(+) = (6R)-5,10-methenyltetrahydrofolate + NADPH. It carries out the reaction (6R)-5,10-methenyltetrahydrofolate + H2O = (6R)-10-formyltetrahydrofolate + H(+). The protein operates within one-carbon metabolism; tetrahydrofolate interconversion. Catalyzes the oxidation of 5,10-methylenetetrahydrofolate to 5,10-methenyltetrahydrofolate and then the hydrolysis of 5,10-methenyltetrahydrofolate to 10-formyltetrahydrofolate. This Alteromonas mediterranea (strain DSM 17117 / CIP 110805 / LMG 28347 / Deep ecotype) protein is Bifunctional protein FolD.